Here is a 632-residue protein sequence, read N- to C-terminus: 1,4-alpha-glucan branching enzyme GlgB (632 aa).

D310 acts as the Nucleophile in catalysis. The active-site Proton donor is E363.

This sequence belongs to the glycosyl hydrolase 13 family. GlgB subfamily. In terms of assembly, monomer.

It catalyses the reaction Transfers a segment of a (1-&gt;4)-alpha-D-glucan chain to a primary hydroxy group in a similar glucan chain.. The protein operates within glycan biosynthesis; glycogen biosynthesis. Its function is as follows. Catalyzes the formation of the alpha-1,6-glucosidic linkages in glycogen by scission of a 1,4-alpha-linked oligosaccharide from growing alpha-1,4-glucan chains and the subsequent attachment of the oligosaccharide to the alpha-1,6 position. The polypeptide is 1,4-alpha-glucan branching enzyme GlgB (Desulfitobacterium hafniense (strain Y51)).